The primary structure comprises 331 residues: Glyceraldehyde-3-phosphate dehydrogenase (331 aa).

Residues 12–13 (RI), Asp34, Arg78, and Thr120 contribute to the NAD(+) site. D-glyceraldehyde 3-phosphate contacts are provided by residues 149–151 (SCT), Thr180, 209–210 (TG), and Arg232. Cys150 serves as the catalytic Nucleophile. Residue Asn314 participates in NAD(+) binding.

Belongs to the glyceraldehyde-3-phosphate dehydrogenase family. In terms of assembly, homotetramer.

Its subcellular location is the cytoplasm. It catalyses the reaction D-glyceraldehyde 3-phosphate + phosphate + NAD(+) = (2R)-3-phospho-glyceroyl phosphate + NADH + H(+). Its pathway is carbohydrate degradation; glycolysis; pyruvate from D-glyceraldehyde 3-phosphate: step 1/5. Its function is as follows. Catalyzes the oxidative phosphorylation of glyceraldehyde 3-phosphate (G3P) to 1,3-bisphosphoglycerate (BPG) using the cofactor NAD. The first reaction step involves the formation of a hemiacetal intermediate between G3P and a cysteine residue, and this hemiacetal intermediate is then oxidized to a thioester, with concomitant reduction of NAD to NADH. The reduced NADH is then exchanged with the second NAD, and the thioester is attacked by a nucleophilic inorganic phosphate to produce BPG. The protein is Glyceraldehyde-3-phosphate dehydrogenase (gapA) of Escherichia fergusonii (strain ATCC 35469 / DSM 13698 / CCUG 18766 / IAM 14443 / JCM 21226 / LMG 7866 / NBRC 102419 / NCTC 12128 / CDC 0568-73).